Here is a 141-residue protein sequence, read N- to C-terminus: Hemoglobin subunit alpha-D (141 aa).

One can recognise a Globin domain in the interval 1-141 (MLTAEDKKLI…VAAVLAEKYR (141 aa)). Residues His-58 and His-87 each coordinate heme b.

This sequence belongs to the globin family. Heterotetramer of two alpha-D chains and two beta chains. Red blood cells.

In terms of biological role, involved in oxygen transport from the lung to the various peripheral tissues. In Cairina moschata (Muscovy duck), this protein is Hemoglobin subunit alpha-D (HBAD).